We begin with the raw amino-acid sequence, 204 residues long: Peroxynitrite isomerase (204 aa).

A GXWXGXG motif is present at residues 21–27 (GEWEGSG). His-195 serves as a coordination point for heme b.

The protein belongs to the nitrobindin family. As to quaternary structure, homodimer. The cofactor is heme b.

The enzyme catalyses peroxynitrite = nitrate. It participates in nitrogen metabolism. In terms of biological role, heme-binding protein able to scavenge peroxynitrite and to protect free L-tyrosine against peroxynitrite-mediated nitration, by acting as a peroxynitrite isomerase that converts peroxynitrite to nitrate. Therefore, this protein likely plays a role in peroxynitrite sensing and in the detoxification of reactive nitrogen and oxygen species (RNS and ROS, respectively). Is able to bind nitric oxide (NO) in vitro, but may act as a sensor of peroxynitrite levels in vivo. The polypeptide is Peroxynitrite isomerase (Arthrobacter sp. (strain FB24)).